A 143-amino-acid polypeptide reads, in one-letter code: Trypsin inhibitor CMc (143 aa).

The first 24 residues, 1 to 24 (MASCSQHLLSAVAIFSVLAGVATA), serve as a signal peptide directing secretion.

It belongs to the protease inhibitor I6 (cereal trypsin/alpha-amylase inhibitor) family. As to expression, endosperm.

The protein localises to the secreted. Functionally, trypsin inhibitor. No alpha-amylase inhibition detected. The sequence is that of Trypsin inhibitor CMc (ITR2) from Hordeum vulgare (Barley).